We begin with the raw amino-acid sequence, 177 residues long: Adenylate kinase (177 aa).

13–18 is an ATP binding site; the sequence is GCGKGT. Residues 33 to 62 are NMP; it reads SSGDIIREEMKKSSKEATVIREMVNSGRLA. AMP contacts are provided by residues serine 34, arginine 39, 60–62, 85–88, and glutamine 92; these read RLA and GYPR. The segment at 119 to 127 is LID; that stretch reads GRNEGRDDD. Arginine 120 contacts ATP. The AMP site is built by arginine 124 and arginine 135.

It belongs to the adenylate kinase family. Monomer.

The protein resides in the cytoplasm. It carries out the reaction AMP + ATP = 2 ADP. Functionally, catalyzes the reversible transfer of the terminal phosphate group between ATP and AMP. Plays an important role in cellular energy homeostasis and in adenine nucleotide metabolism. This chain is Adenylate kinase, found in Encephalitozoon cuniculi (strain GB-M1) (Microsporidian parasite).